The chain runs to 424 residues: Acetyl-CoA acetyltransferase, mitochondrial (424 aa).

The transit peptide at 1–30 (MAALAVLHGVVRRPLLRGLLQEVRCLGRSY) directs the protein to the mitochondrion. K63 is subject to N6-acetyllysine; alternate. Position 63 is an N6-succinyllysine; alternate (K63). K75 carries the N6-succinyllysine modification. C123 (acyl-thioester intermediate) is an active-site residue. Residues K171, K178, K187, and K199 each carry the N6-acetyllysine; alternate modification. N6-succinyllysine; alternate occurs at positions 171, 178, 187, and 199. S204 carries the post-translational modification Phosphoserine. Y216 contacts CoA. Position 216 (Y216) interacts with K(+). K220 and K227 each carry N6-acetyllysine; alternate. An N6-succinyllysine; alternate mark is found at K220 and K227. K240 carries the post-translational modification N6-succinyllysine. K242 bears the N6-acetyllysine; alternate mark. N6-succinyllysine; alternate is present on K242. Residues K248 and K254 each carry the N6-acetyllysine modification. Residues 255-257 (RVD) and K260 each bind CoA. The residue at position 260 (K260) is an N6-acetyllysine; alternate. Position 260 is an N6-succinyllysine; alternate (K260). Residues K263 and K265 each carry the N6-succinyllysine modification. The residue at position 270 (K270) is an N6-acetyllysine. Residues A277, A278, and A280 each coordinate K(+). S281 serves as a coordination point for CoA. An N6-acetyllysine modification is found at K335. V378 contributes to the K(+) binding site. The Proton donor/acceptor role is filled by C410.

The protein belongs to the thiolase-like superfamily. Thiolase family. In terms of assembly, homotetramer. In terms of processing, succinylation at Lys-265, adjacent to a coenzyme A binding site. Desuccinylated by SIRT5.

It is found in the mitochondrion. It catalyses the reaction 2 acetyl-CoA = acetoacetyl-CoA + CoA. The catalysed reaction is propanoyl-CoA + acetyl-CoA = 2-methyl-3-oxobutanoyl-CoA + CoA. Its pathway is lipid metabolism; fatty acid beta-oxidation. Activated by potassium ions, but not sodium ions. This is one of the enzymes that catalyzes the last step of the mitochondrial beta-oxidation pathway, an aerobic process breaking down fatty acids into acetyl-CoA. Using free coenzyme A/CoA, catalyzes the thiolytic cleavage of medium- to long-chain 3-oxoacyl-CoAs into acetyl-CoA and a fatty acyl-CoA shortened by two carbon atoms. The activity of the enzyme is reversible and it can also catalyze the condensation of two acetyl-CoA molecules into acetoacetyl-CoA. Thereby, it plays a major role in ketone body metabolism. The chain is Acetyl-CoA acetyltransferase, mitochondrial (Acat1) from Rattus norvegicus (Rat).